We begin with the raw amino-acid sequence, 117 residues long: Eukaryotic translation initiation factor 4E-binding protein 1 (117 aa).

Composition is skewed to polar residues over residues 1-12 (MSAGSSCSQTPS) and 33-47 (YSTTPGGTLFSTTPG). The interval 1 to 47 (MSAGSSCSQTPSRAIPTRRVALGDGVQLPPGDYSTTPGGTLFSTTPG) is disordered. S2 carries the post-translational modification N-acetylserine. A phosphothreonine mark is found at T36 and T40. A Phosphoserine modification is found at S43. Phosphothreonine is present on residues T45 and T49. Phosphotyrosine is present on Y53. Positions 53-59 (YDRKFLM) match the YXXXXLphi motif motif. K56 is covalently cross-linked (Glycyl lysine isopeptide (Lys-Gly) (interchain with G-Cter in ubiquitin)). S64 is modified (phosphoserine). Residues 64 to 117 (SPVAKTPPKDLPAIPGVTSPTSDEPPMQASQSQLPSSPEDKRAGGEESQFEMDI) are disordered. At T69 the chain carries Phosphothreonine. Residues 81–99 (TSPTSDEPPMQASQSQLPS) show a composition bias toward polar residues. A phosphoserine mark is found at S82, S95, S99, S100, and S111. The short motif at 113–117 (FEMDI) is the TOS motif element.

The protein belongs to the eIF4E-binding protein family. As to quaternary structure, hypophosphorylated EIF4EBP1 competes with EIF4G1/EIF4G3 to interact with EIF4E; insulin stimulated MAP-kinase (MAPK1 and MAPK3) or mTORC1 phosphorylation of EIF4EBP1 causes dissociation of the complex allowing EIF4G1/EIF4G3 to bind and consequent initiation of translation. Interacts (via TOS motif) with RPTOR; promoting phosphorylation by mTORC1. Phosphorylated on serine and threonine residues in response to insulin, EGF and PDGF. Phosphorylation at Thr-36, Thr-45, Ser-64 and Thr-69, corresponding to the hyperphosphorylated form, is regulated by mTORC1 and abolishes binding to EIF4E. Post-translationally, ubiquitinated: when eIF4E levels are low, hypophosphorylated form is ubiquitinated by the BCR(KLHL25) complex, leading to its degradation and serving as a homeostatic mechanism to maintain translation and prevent eIF4E inhibition when eIF4E levels are low. Not ubiquitinated when hyperphosphorylated (at Thr-36, Thr-45, Ser-64 and Thr-69) or associated with eIF4E. Highest expression in fat cells.

It localises to the cytoplasm. It is found in the nucleus. Its function is as follows. Repressor of translation initiation that regulates EIF4E activity by preventing its assembly into the eIF4F complex: hypophosphorylated form competes with EIF4G1/EIF4G3 and strongly binds to EIF4E, leading to repress translation. In contrast, hyperphosphorylated form dissociates from EIF4E, allowing interaction between EIF4G1/EIF4G3 and EIF4E, leading to initiation of translation. Mediates the regulation of protein translation by hormones, growth factors and other stimuli that signal through the MAP kinase and mTORC1 pathways. This Mus musculus (Mouse) protein is Eukaryotic translation initiation factor 4E-binding protein 1 (Eif4ebp1).